We begin with the raw amino-acid sequence, 54 residues long: ATP synthase F(0) complex subunit 8 (54 aa).

Residues 4–24 (LNPGPWFAILVFSWLIFLTII) traverse the membrane as a helical segment. The tract at residues 35–54 (NEPTPVSAEKHKTESWDWPW) is disordered. Residues 42 to 54 (AEKHKTESWDWPW) are compositionally biased toward basic and acidic residues.

Belongs to the ATPase protein 8 family. Component of the ATP synthase complex composed at least of ATP5F1A/subunit alpha, ATP5F1B/subunit beta, ATP5MC1/subunit c (homooctomer), MT-ATP6/subunit a, MT-ATP8/subunit 8, ATP5ME/subunit e, ATP5MF/subunit f, ATP5MG/subunit g, ATP5MK/subunit k, ATP5MJ/subunit j, ATP5F1C/subunit gamma, ATP5F1D/subunit delta, ATP5F1E/subunit epsilon, ATP5PF/subunit F6, ATP5PB/subunit b, ATP5PD/subunit d, ATP5PO/subunit OSCP. ATP synthase complex consists of a soluble F(1) head domain (subunits alpha(3) and beta(3)) - the catalytic core - and a membrane F(0) domain - the membrane proton channel (subunits c, a, 8, e, f, g, k and j). These two domains are linked by a central stalk (subunits gamma, delta, and epsilon) rotating inside the F1 region and a stationary peripheral stalk (subunits F6, b, d, and OSCP).

The protein resides in the mitochondrion membrane. In terms of biological role, subunit 8, of the mitochondrial membrane ATP synthase complex (F(1)F(0) ATP synthase or Complex V) that produces ATP from ADP in the presence of a proton gradient across the membrane which is generated by electron transport complexes of the respiratory chain. ATP synthase complex consist of a soluble F(1) head domain - the catalytic core - and a membrane F(1) domain - the membrane proton channel. These two domains are linked by a central stalk rotating inside the F(1) region and a stationary peripheral stalk. During catalysis, ATP synthesis in the catalytic domain of F(1) is coupled via a rotary mechanism of the central stalk subunits to proton translocation. In vivo, can only synthesize ATP although its ATP hydrolase activity can be activated artificially in vitro. Part of the complex F(0) domain. The sequence is that of ATP synthase F(0) complex subunit 8 from Cyprinus carpio (Common carp).